The primary structure comprises 65 residues: Large ribosomal subunit protein bL35 (65 aa).

This sequence belongs to the bacterial ribosomal protein bL35 family.

The sequence is that of Large ribosomal subunit protein bL35 from Nitrosomonas europaea (strain ATCC 19718 / CIP 103999 / KCTC 2705 / NBRC 14298).